The sequence spans 2145 residues: Mediator of RNA polymerase II transcription subunit 12-like protein (2145 aa).

The disordered stretch occupies residues 1–30 (MAAFGLLSYEQRPLKRPRLGPPDVYPQDPK). Thr462 carries the phosphothreonine modification. Over residues 1436 to 1455 (ELEKGQHLGSSSKKERDRQK) the composition is skewed to basic and acidic residues. 3 disordered regions span residues 1436 to 1460 (ELEK…KSMS), 1721 to 1802 (RSYY…ISSQ), and 2029 to 2145 (DAVL…PSHF). The span at 1768–1777 (TKGRKRKTKS) shows a compositional bias: basic residues. Residues 2052-2069 (RQPQVRQQQRLLQMQQPQ) are compositionally biased toward low complexity. Positions 2070–2079 (QPQPQQPPQP) are enriched in pro residues. Polar residues predominate over residues 2089 to 2099 (TLGLQAMQPQQ). Low complexity predominate over residues 2104 to 2124 (RQGLQQTQQQQQTAALVRQLQ). A compositionally biased stretch (polar residues) spans 2125 to 2136 (KQLSSNQPQQGV).

This sequence belongs to the Mediator complex subunit 12 family. As to quaternary structure, may be a component of the Mediator complex, which is known to be composed of MED1, MED4, MED6, MED7, MED8, MED9, MED10, MED11, MED12, MED13, MED13L, MED14, MED15, MED16, MED17, MED18, MED19, MED20, MED21, MED22, MED23, MED24, MED25, MED26, MED27, MED29, MED30, MED31, CCNC, CDK8 and CDC2L6/CDK11. The MED12, MED13, CCNC and CDK8 subunits form a distinct module termed the CDK8 module. Mediator containing the CDK8 module is less active than Mediator lacking this module in supporting transcriptional activation. Individual preparations of the Mediator complex lacking one or more distinct subunits have been variously termed ARC, CRSP, DRIP, PC2, SMCC and TRAP.

It is found in the nucleus. Its function is as follows. May be a component of the Mediator complex, a coactivator involved in the regulated transcription of nearly all RNA polymerase II-dependent genes. Mediator functions as a bridge to convey information from gene-specific regulatory proteins to the basal RNA polymerase II transcription machinery. Mediator is recruited to promoters by direct interactions with regulatory proteins and serves as a scaffold for the assembly of a functional preinitiation complex with RNA polymerase II and the general transcription factors. This is Mediator of RNA polymerase II transcription subunit 12-like protein (MED12L) from Homo sapiens (Human).